Consider the following 147-residue polypeptide: UPF0735 ACT domain-containing protein ABC1543 (147 aa).

An ACT domain is found at 70 to 145 (TFSINLADRS…SVERVELVGS (76 aa)).

Belongs to the UPF0735 family.

This is UPF0735 ACT domain-containing protein ABC1543 from Shouchella clausii (strain KSM-K16) (Alkalihalobacillus clausii).